The primary structure comprises 381 residues: Dual specificity protein phosphatase 6 (381 aa).

A Rhodanese domain is found at 30 to 148; sequence GNERLLLMDC…FQAEFSLHCE (119 aa). Residues 176–203 form a disordered region; it reads SSSDIESDLDRDPNSATDSDGSPLSNSQ. The span at 189 to 203 shows a compositional bias: polar residues; the sequence is NSATDSDGSPLSNSQ. The Tyrosine-protein phosphatase domain occupies 206–349; the sequence is FPVEILPFLY…LLDFERTLGL (144 aa). Catalysis depends on C293, which acts as the Phosphocysteine intermediate.

It belongs to the protein-tyrosine phosphatase family. Non-receptor class dual specificity subfamily. Interacts with MAPK1/ERK2. Ubiquitinated by the SCF(FBXO31) complex, leading to its proteasomal degradation. Expressed in keratinocytes (at protein level).

It localises to the cytoplasm. It catalyses the reaction O-phospho-L-tyrosyl-[protein] + H2O = L-tyrosyl-[protein] + phosphate. The catalysed reaction is O-phospho-L-seryl-[protein] + H2O = L-seryl-[protein] + phosphate. It carries out the reaction O-phospho-L-threonyl-[protein] + H2O = L-threonyl-[protein] + phosphate. Its function is as follows. Dual specificity protein phosphatase, which mediates dephosphorylation and inactivation of MAP kinases. Has a specificity for the ERK family. Plays an important role in alleviating chronic postoperative pain. Necessary for the normal dephosphorylation of the long-lasting phosphorylated forms of spinal MAPK1/3 and MAP kinase p38 induced by peripheral surgery, which drives the resolution of acute postoperative allodynia. Also important for dephosphorylation of MAPK1/3 in local wound tissue, which further contributes to resolution of acute pain. Promotes cell differentiation by regulating MAPK1/MAPK3 activity and regulating the expression of AP1 transcription factors. This Homo sapiens (Human) protein is Dual specificity protein phosphatase 6 (DUSP6).